The chain runs to 495 residues: REST corepressor 3 (495 aa).

The 83-residue stretch at 1 to 83 (MRVGAEYQAR…KSLADLPNFT (83 aa)) folds into the ELM2 domain. Lys20 is covalently cross-linked (Glycyl lysine isopeptide (Lys-Gly) (interchain with G-Cter in SUMO2)). The SANT 1 domain maps to 84-135 (PFPDEWTVEDKVLFEQAFSFHGKSFHRIQQMLPDKTIASLVKYYYSWKKTRS). Positions 147 to 219 (LANRHNQGDS…SQRSKCRPPK (73 aa)) are disordered. Phosphoserine occurs at positions 156 and 171. Residues 162-184 (ETHPMDGNDSDYDPKKEAKKEGN) are compositionally biased toward basic and acidic residues. A Glycyl lysine isopeptide (Lys-Gly) (interchain with G-Cter in SUMO2) cross-link involves residue Lys193. A compositionally biased stretch (basic residues) spans 205-217 (QHRHHSQRSKCRP). Positions 237–273 (AANTILRQLDMELISLKRQVQNAKQVNSALKQKMEGG) form a coiled coil. Lys285 participates in a covalent cross-link: Glycyl lysine isopeptide (Lys-Gly) (interchain with G-Cter in SUMO2). Residues 285 to 336 (KINARWTTEEQLLAVQGVRKYGKDFQAIADVIGNKTVGQVKNFFVNYRRRFN) form the SANT 2 domain. Positions 346–495 (AEQGTQASNG…IQTDSQSSLH (150 aa)) are disordered. The segment covering 348-357 (QGTQASNGDA) has biased composition (polar residues). Thr376 carries the phosphothreonine modification. Residues 393–405 (PSPPAPSSTPTPT) show a composition bias toward pro residues. Low complexity predominate over residues 419–428 (RPTLPAAPAL). An asymmetric dimethylarginine mark is found at Arg445 and Arg457. Over residues 475 to 495 (VGGQQPPSLIGIQTDSQSSLH) the composition is skewed to polar residues.

The protein belongs to the CoREST family.

The protein resides in the nucleus. May act as a component of a corepressor complex that represses transcription. The polypeptide is REST corepressor 3 (RCOR3) (Homo sapiens (Human)).